The primary structure comprises 52 residues: Eukaryotic translation initiation factor 5A (52 aa).

Lysine 42 is subject to Hypusine.

This sequence belongs to the eIF-5A family. Lys-42 undergoes hypusination, a unique post-translational modification that consists in the addition of a butylamino group from spermidine to lysine side chain, leading to the formation of the unusual amino acid hypusine. eIF-5As are the only known proteins to undergo this modification, which is essential for their function.

It localises to the cytoplasm. Translation factor that promotes translation elongation and termination, particularly upon ribosome stalling at specific amino acid sequence contexts. Binds between the exit (E) and peptidyl (P) site of the ribosome and promotes rescue of stalled ribosome: specifically required for efficient translation of polyproline-containing peptides as well as other motifs that stall the ribosome. Acts as a ribosome quality control (RQC) cofactor by joining the RQC complex to facilitate peptidyl transfer during CAT tailing step. This is Eukaryotic translation initiation factor 5A from Schistosoma mansoni (Blood fluke).